The sequence spans 293 residues: Nucleotide-binding protein BA_5384/GBAA_5384/BAS5004 (293 aa).

14-21 contributes to the ATP binding site; the sequence is GMSGAGKT. Position 65–68 (65–68) interacts with GTP; it reads DLRG.

This sequence belongs to the RapZ-like family.

Its function is as follows. Displays ATPase and GTPase activities. This chain is Nucleotide-binding protein BA_5384/GBAA_5384/BAS5004, found in Bacillus anthracis.